We begin with the raw amino-acid sequence, 208 residues long: V-type ATP synthase subunit D (208 aa).

Belongs to the V-ATPase D subunit family.

Produces ATP from ADP in the presence of a proton gradient across the membrane. This is V-type ATP synthase subunit D from Chlamydia caviae (strain ATCC VR-813 / DSM 19441 / 03DC25 / GPIC) (Chlamydophila caviae).